The primary structure comprises 202 residues: Cyclin-U4-1 (202 aa).

Belongs to the cyclin family. Cyclin U/P subfamily. As to quaternary structure, interacts with CDKA-1. Expressed in roots, stems and flowers. Expressed in the shoot apex, leaf primordia and young leaves.

This is Cyclin-U4-1 (CYCU4-1) from Arabidopsis thaliana (Mouse-ear cress).